The following is a 243-amino-acid chain: MRKPVIAGNWKMHMTCAQAREYTAMFLPLIEATPNDRHVVIAPPFTAISSMAESVGGTRLELSSQNVHWEDDGAYTAEVSPTMLLEHQVRYAIVGHSEPRKYFSESDEQINRRARSAQAHGLIPIVCVGESDEQRERGEAERVIRRQVEQGLEDTDPDKLVVAYEPIWAIGTGKTCEASEANRICGLIRRWVGASELIIQYGGSVKPGNIDELMAMSDIDGVLVGGASLDPESFARIANYQTS.

A substrate-binding site is contributed by 9–11 (NWK). His96 serves as the catalytic Electrophile. The Proton acceptor role is filled by Glu165. Residues Gly171, Ser204, and 225-226 (GG) contribute to the substrate site.

This sequence belongs to the triosephosphate isomerase family. As to quaternary structure, homodimer.

Its subcellular location is the cytoplasm. The enzyme catalyses D-glyceraldehyde 3-phosphate = dihydroxyacetone phosphate. It functions in the pathway carbohydrate biosynthesis; gluconeogenesis. Its pathway is carbohydrate degradation; glycolysis; D-glyceraldehyde 3-phosphate from glycerone phosphate: step 1/1. In terms of biological role, involved in the gluconeogenesis. Catalyzes stereospecifically the conversion of dihydroxyacetone phosphate (DHAP) to D-glyceraldehyde-3-phosphate (G3P). This chain is Triosephosphate isomerase, found in Prochlorococcus marinus (strain MIT 9313).